The sequence spans 926 residues: Alpha-aminoadipic semialdehyde synthase, mitochondrial (926 aa).

Residues 1–27 (MLRVSRTKLGRLSPSLSRGLHHKAVMA) constitute a mitochondrion transit peptide. Residues 28–455 (LRREDVNAWE…DAVIASNGML (428 aa)) form a lysine-ketoglutarate reductase region. An N6-acetyllysine mark is found at K48 and K56. N6-acetyllysine; alternate is present on K93. K93 carries the N6-succinyllysine; alternate modification. K128 carries the post-translational modification N6-acetyllysine. Residue K138 is modified to N6-acetyllysine; alternate. K138 carries the N6-succinyllysine; alternate modification. K274 is subject to N6-succinyllysine. N6-acetyllysine; alternate is present on K286. K286 carries the N6-succinyllysine; alternate modification. K333 is subject to N6-succinyllysine. Position 458 is an N6-acetyllysine; alternate (K458). N6-succinyllysine; alternate is present on K458. Residues 477–926 (MGTKKKVLVL…MYTTQSTIKL (450 aa)) are saccharopine dehydrogenase. Positions 488, 512, and 516 each coordinate NAD(+). An N6-acetyllysine; alternate mark is found at K523 and K535. N6-succinyllysine; alternate occurs at positions 523 and 535. L554, A576, and S577 together coordinate NAD(+). 577 to 578 (SY) is an L-saccharopine binding site. K584 carries the post-translational modification N6-acetyllysine; alternate. Residue K584 is modified to N6-succinyllysine; alternate. Positions 603, 604, and 605 each coordinate NAD(+). D604 is a binding site for L-saccharopine. An L-saccharopine-binding site is contributed by R703. K707 is modified (N6-acetyllysine). Position 724-726 (724-726 (TLR)) interacts with L-saccharopine. An N6-succinyllysine modification is found at K732. N6-acetyllysine is present on K739. K761 bears the N6-acetyllysine; alternate mark. An N6-succinyllysine; alternate modification is found at K761. K780 bears the N6-acetyllysine mark.

In the N-terminal section; belongs to the AlaDH/PNT family. This sequence in the C-terminal section; belongs to the saccharopine dehydrogenase family. As to quaternary structure, homotetramer.

The protein resides in the mitochondrion. The catalysed reaction is L-saccharopine + NADP(+) + H2O = L-lysine + 2-oxoglutarate + NADPH + H(+). It catalyses the reaction L-saccharopine + NAD(+) + H2O = (S)-2-amino-6-oxohexanoate + L-glutamate + NADH + H(+). It functions in the pathway amino-acid degradation; L-lysine degradation via saccharopine pathway; glutaryl-CoA from L-lysine: step 1/6. It participates in amino-acid degradation; L-lysine degradation via saccharopine pathway; glutaryl-CoA from L-lysine: step 2/6. In terms of biological role, bifunctional enzyme that catalyzes the first two steps in lysine degradation. In Bos taurus (Bovine), this protein is Alpha-aminoadipic semialdehyde synthase, mitochondrial.